A 59-amino-acid chain; its full sequence is Bacteriocin curvacin-A (59 aa).

The propeptide occupies methionine 1–glycine 18. Residues cysteine 28 and cysteine 33 are joined by a disulfide bond.

The protein belongs to the bacteriocin class IIA/YGNGV family.

It localises to the secreted. In terms of biological role, bactericidal activity; inhibits closely related Lactobacilli, Listeria monocytogenes and ivanovvi, Enterococcus faecalis, Carnobacterium sp and Brocothrix thermosphacta. The chain is Bacteriocin curvacin-A (curA) from Latilactobacillus curvatus (Lactobacillus curvatus).